The primary structure comprises 432 residues: Interleukin-11 receptor subunit alpha-1 (432 aa).

The N-terminal stretch at 1-23 is a signal peptide; that stretch reads MSSSCSGLTRVLVAVATALVSSS. Residues 24 to 372 lie on the Extracellular side of the membrane; it reads SPCPQAWGPP…DPLEQVAVLA (349 aa). The Ig-like C2-type domain maps to 27–110; sequence PQAWGPPGVQ…SGGMVTLKLG (84 aa). Disulfide bonds link Cys-48-Cys-94, Cys-120-Cys-130, and Cys-170-Cys-180. Fibronectin type-III domains lie at 112–219 and 220–317; these read PPAR…LRPD and PPQG…TPST. The N-linked (GlcNAc...) asparagine glycan is linked to Asn-127. Residues 151-170 are disordered; sequence KTLPGAESQRESPSTGPWPC. A glycan (N-linked (GlcNAc...) asparagine) is linked at Asn-194. The WSXWS motif motif lies at 304 to 308; it reads WSAWS. 2 disordered regions span residues 309-332 and 342-361; these read PEAW…QGHG and EDSP…PLDH. A helical transmembrane segment spans residues 373–393; sequence SLGIFSCLGLAVGALALGLWL. The Cytoplasmic segment spans residues 394–432; that stretch reads RLRRSGKDGPQKPGLLAPMIPVEKLPGIPNLQRTPENFS.

It belongs to the type I cytokine receptor family. Type 3 subfamily. In terms of assembly, on IL11 binding, forms a multimer complex with IL6ST/gp130. Post-translationally, a short soluble form is also released from the membrane by proteolysis. The sIL11RA is formed either by limited proteolysis of membrane-bound receptors, a process referred to as ectodomain shedding, or directly secreted from the cells after alternative mRNA splicing. mIL11RA is cleaved by the proteases ADAM10, ELANE and PRTN3. Widely expressed in all adult tissues and in embryos. Highest levels in kidney, skeletal muscle and embryo.

It localises to the membrane. The protein resides in the secreted. Receptor for interleukin-11. The receptor systems for IL6, LIF, OSM, CNTF, IL11 and CT1 can utilize IL6ST for initiating signal transmission. The IL11/IL11RA/IL6ST complex may be involved in the control of proliferation and/or differentiation of skeletogenic progenitor or other mesenchymal cells. Essential for the normal development of craniofacial bones and teeth. Functionally, soluble form of IL11 receptor (sIL11RA) that acts as an agonist of IL11 activity. The IL11:sIL11RA complex binds to IL6ST/gp130 on cell surfaces and induces signaling also on cells that do not express membrane-bound IL11RA in a process called IL11 trans-signaling. This Mus musculus (Mouse) protein is Interleukin-11 receptor subunit alpha-1.